A 539-amino-acid chain; its full sequence is Chaperonin GroEL 1 (539 aa).

ATP-binding positions include 29-32 (TLGP), 86-90 (DGTTT), glycine 413, and aspartate 495.

It belongs to the chaperonin (HSP60) family. As to quaternary structure, forms a cylinder of 14 subunits composed of two heptameric rings stacked back-to-back. Interacts with the co-chaperonin GroES.

The protein resides in the cytoplasm. The catalysed reaction is ATP + H2O + a folded polypeptide = ADP + phosphate + an unfolded polypeptide.. In terms of biological role, together with its co-chaperonin GroES, plays an essential role in assisting protein folding. The GroEL-GroES system forms a nano-cage that allows encapsulation of the non-native substrate proteins and provides a physical environment optimized to promote and accelerate protein folding. The protein is Chaperonin GroEL 1 of Mycobacterium bovis (strain ATCC BAA-935 / AF2122/97).